The primary structure comprises 126 residues: Protein Wnt-1 (126 aa).

The O-palmitoleoyl serine; by PORCN moiety is linked to residue Ser-1. Cys-92 and Cys-107 are joined by a disulfide. N-linked (GlcNAc...) asparagine glycans are attached at residues Asn-93 and Asn-123.

This sequence belongs to the Wnt family. In terms of processing, palmitoleoylation is required for efficient binding to frizzled receptors. Palmitoleoylation is necessary for proper trafficking to cell surface. Depalmitoleoylated by NOTUM, leading to inhibit Wnt signaling pathway.

It is found in the secreted. The protein resides in the extracellular space. It localises to the extracellular matrix. Functionally, ligand for members of the frizzled family of seven transmembrane receptors. Acts in the canonical Wnt signaling pathway by promoting beta-catenin-dependent transcriptional activation. Plays an essential role in the development of the embryonic brain and central nervous system (CNS). Has a role in osteoblast function, bone development and bone homeostasis. This Sceloporus occidentalis (Western fence lizard) protein is Protein Wnt-1 (WNT-1).